A 900-amino-acid chain; its full sequence is E3 ubiquitin-protein ligase BRE1-like 2 (900 aa).

Residues 1–31 (MENQESDEPMQKKPHLLDSVSPNSMARNSSP) form a disordered region. The segment covering 20-31 (VSPNSMARNSSP) has biased composition (polar residues). 4 coiled-coil regions span residues 63–96 (TVLQLQNQKLVQQLDLQKKQLYDVESKIQELQLN), 217–300 (EDAT…KDAA), 437–660 (SRIE…AEME), and 706–737 (SEKQVMEKQLHQVNASVENFKARIAHNEEQMK). The RING-type zinc finger occupies 848–887 (CGVCFDRPKEVVIVKCYHLFCQQCIQRSLEIRHRKCPGCG).

Belongs to the BRE1 family. As to quaternary structure, may act as a tetramer consisting of two copies of HUB1 and two copies of HUB2. As to expression, ubiquitously expressed.

Its subcellular location is the nucleus. It catalyses the reaction S-ubiquitinyl-[E2 ubiquitin-conjugating enzyme]-L-cysteine + [acceptor protein]-L-lysine = [E2 ubiquitin-conjugating enzyme]-L-cysteine + N(6)-ubiquitinyl-[acceptor protein]-L-lysine.. It participates in protein modification; protein ubiquitination. In terms of biological role, E3 ubiquitin-protein ligase that monoubiquitinates H2B to form H2BK143ub1. H2BK143ub1 gives a specific tag for epigenetic transcriptional activation and is also prerequisite for H3K4me and maybe H3K79me. It thereby plays a central role in histone code and gene regulation. Forms a ubiquitin ligase complex in cooperation with the E2 enzyme UBC2/RAD6. This chain is E3 ubiquitin-protein ligase BRE1-like 2 (HUB2), found in Arabidopsis thaliana (Mouse-ear cress).